The primary structure comprises 135 residues: Galectin-1 (135 aa).

Ala-2 is modified (N-acetylalanine). Positions 4-135 constitute a Galectin domain; that stretch reads GLVASNLNLK…DFKIKCVAFD (132 aa). Lys-13 and Lys-29 each carry N6-acetyllysine. At Ser-30 the chain carries Phosphoserine. A beta-D-galactoside contacts are provided by residues 45–49, His-53, Asn-62, and 69–72; these read HFNPR and WGAE. An N6-acetyllysine; alternate modification is found at Lys-108. The residue at position 108 (Lys-108) is an N6-succinyllysine; alternate. N6-acetyllysine is present on Lys-128.

In terms of assembly, homodimer. Binds LGALS3BP. Interacts with CD2, CD3, CD4, CD6, CD7, CD43, ALCAM and CD45. Interacts with laminin (via poly-N-acetyllactosamine). Interacts with SUSD2. Interacts with cargo receptor TMED10; the interaction mediates the translocation from the cytoplasm into the ERGIC (endoplasmic reticulum-Golgi intermediate compartment) and thereby secretion. Post-translationally, the N-terminus is blocked.

It localises to the secreted. It is found in the extracellular space. The protein resides in the extracellular matrix. The protein localises to the cytoplasm. Its function is as follows. Lectin that binds beta-galactoside and a wide array of complex carbohydrates. Plays a role in regulating apoptosis, cell proliferation and cell differentiation. Inhibits CD45 protein phosphatase activity and therefore the dephosphorylation of Lyn kinase. Strong inducer of T-cell apoptosis. This Bubalus bubalis (Domestic water buffalo) protein is Galectin-1.